A 36-amino-acid polypeptide reads, in one-letter code: Photosystem I reaction center subunit VIII (36 aa).

The helical transmembrane segment at 8-28 threads the bilayer; that stretch reads SVLVPLVGLIFPAMAMASLFL.

It belongs to the PsaI family.

It localises to the plastid. Its subcellular location is the chloroplast thylakoid membrane. Functionally, may help in the organization of the PsaL subunit. In Daucus carota (Wild carrot), this protein is Photosystem I reaction center subunit VIII.